The following is a 690-amino-acid chain: SWI/SNF-related matrix-associated actin-dependent regulator of chromatin subfamily A-like protein 1 homolog (690 aa).

The segment at 30-49 (MQAAANATASTSSAAPPAPP) is disordered. A compositionally biased stretch (low complexity) spans 31-44 (QAAANATASTSSAA). An HARP domain is found at 92–170 (PTSLIKPTIG…AVKVELEPLP (79 aa)). In terms of domain architecture, Helicase ATP-binding spans 209-367 (IFALERDGRI…FTQIRLIDHK (159 aa)). Residue 222–229 (DEMGLGKS) coordinates ATP. The DESH box signature appears at 316 to 319 (DESH). Positions 411-428 (RRLKADVLKDLPEKRREV) match the Nuclear localization signal motif. Positions 482–639 (ILENYFYPDA…TFRTADKMHL (158 aa)) constitute a Helicase C-terminal domain.

It belongs to the SNF2/RAD54 helicase family. SMARCAL1 subfamily.

Its subcellular location is the nucleus. It carries out the reaction ATP + H2O = ADP + phosphate + H(+). Its function is as follows. ATP-dependent annealing helicase that catalyzes the rewinding of the stably unwound DNA. The polypeptide is SWI/SNF-related matrix-associated actin-dependent regulator of chromatin subfamily A-like protein 1 homolog (Caenorhabditis elegans).